The following is a 564-amino-acid chain: Beta-catenin-like protein 1 homolog (564 aa).

Residues 1–56 (MDVDSIFKNTEETNKKRNPEEADSLEPASSRRRLAEENSDEENEEFDEEGGRFFGS) form a disordered region. Basic and acidic residues predominate over residues 9–20 (NTEETNKKRNPE). Positions 37–48 (ENSDEENEEFDE) are enriched in acidic residues. At serine 39 the chain carries Phosphoserine. HEAT repeat units follow at residues 83–133 (PTEL…VLSE) and 138–177 (IPIF…DEDV). 5 ARM repeats span residues 179-229 (PDAL…LLSV), 230-276 (DNSI…LANS), 277-326 (KEAK…LVQE), 328-366 (KGKS…LLFG), and 367-411 (PLST…LFRS). The stretch at 465–528 (EKSTKWFLQQ…DALKNYHENL (64 aa)) forms a coiled coil.

The protein resides in the nucleus. In terms of biological role, probable spliceosomal component involved in the activation of pre-mRNA splicing. This is Beta-catenin-like protein 1 homolog (ctnnbl1) from Schizosaccharomyces pombe (strain 972 / ATCC 24843) (Fission yeast).